The primary structure comprises 390 residues: Large ribosomal subunit protein mL44 (390 aa).

Residues Met1–Gln59 constitute a mitochondrion transit peptide. An RNase III domain is found at Ala139–Ile205. In terms of domain architecture, DRBM spans Gln302–Cys372.

The protein belongs to the ribonuclease III family. Mitochondrion-specific ribosomal protein mL44 subfamily. In terms of assembly, component of the mitochondrial large ribosomal subunit (mt-LSU). Mature yeast 74S mitochondrial ribosomes consist of a small (37S) and a large (54S) subunit. The 37S small subunit contains a 15S ribosomal RNA (15S mt-rRNA) and 34 different proteins. The 54S large subunit contains a 21S rRNA (21S mt-rRNA) and 46 different proteins. mL44 forms a heterodimer with mL57 and stabilizes rRNA expansion segments 1/2 at a membrane-facing protuberance close to the point of attachment of the ribosome to the translocon in the membrane.

The protein localises to the mitochondrion. Component of the mitochondrial ribosome (mitoribosome), a dedicated translation machinery responsible for the synthesis of mitochondrial genome-encoded proteins, including at least some of the essential transmembrane subunits of the mitochondrial respiratory chain. The mitoribosomes are attached to the mitochondrial inner membrane and translation products are cotranslationally integrated into the membrane. The sequence is that of Large ribosomal subunit protein mL44 (MRPL3) from Saccharomyces cerevisiae (strain ATCC 204508 / S288c) (Baker's yeast).